The following is a 601-amino-acid chain: Threonine dehydratase (601 aa).

A chloroplast-targeting transit peptide spans 1–51; it reads MEVLCQAPAGNSNFACNPKFTAIRTRAISSNDTFKVISSTGNNKKMKGAIR. 2 ACT-like domains span residues 427–499 and 521–592; these read ALLA…NLTN and IFCQ…IESL.

This sequence belongs to the serine/threonine dehydratase family. Pyridoxal 5'-phosphate serves as cofactor.

The protein resides in the plastid. Its subcellular location is the chloroplast. It catalyses the reaction L-threonine = 2-oxobutanoate + NH4(+). Its pathway is amino-acid biosynthesis; L-isoleucine biosynthesis; 2-oxobutanoate from L-threonine: step 1/1. Functionally, catalyzes the conversion of threonine to alpha-keto butyrate in isoleucine (Ile) biosynthesis. Required for JA-Ile biosynthesis, a signaling molecule involved in defense and resistance to the herbivore Manduca sexta caterpillars. This is Threonine dehydratase from Nicotiana attenuata (Coyote tobacco).